The following is a 434-amino-acid chain: Enolase (434 aa).

Substrate-binding residues include H158 and E167. Residue E210 is the Proton donor of the active site. The Mg(2+) site is built by D245, E294, and D319. The substrate site is built by E294 and D319. The active-site Proton acceptor is K344. Substrate is bound by residues 371–374 (SHRS) and K395.

It belongs to the enolase family. As to quaternary structure, homodimer. The cofactor is Mg(2+).

The protein resides in the cytoplasm. The enzyme catalyses (2R)-2-phosphoglycerate = phosphoenolpyruvate + H2O. The protein operates within carbohydrate degradation; glycolysis; pyruvate from D-glyceraldehyde 3-phosphate: step 4/5. In Schistosoma mansoni (Blood fluke), this protein is Enolase (ENO).